Consider the following 718-residue polypeptide: Calpastatin (718 aa).

2 disordered regions span residues 1 to 189 (MNPA…MSST) and 210 to 238 (EKKT…LSSD). Basic residues predominate over residues 20-29 (PHSKKRHRRQ). Composition is skewed to basic and acidic residues over residues 30–61 (DAKT…EHTK) and 68–104 (HASD…KPQD). Residue lysine 32 forms a Glycyl lysine isopeptide (Lys-Gly) (interchain with G-Cter in SUMO2) linkage. Position 49 is an N6-acetyllysine (lysine 49). At serine 86 the chain carries Phosphoserine. Positions 114-124 (AAGTTAAPGKA) are enriched in low complexity. 3 positions are modified to phosphoserine: serine 133, serine 222, and serine 243. Residues 170-222 (TQEDSTAYTGPEISDPMSSTYIEELGKREVTIPPKYRELLEKKTGVAGPPPDS) form an Inhibitory domain 1 repeat. 2 disordered regions span residues 266–291 (ESAK…AMSD) and 320–509 (EAKR…QLPA). Position 290 is a blocked amino end (Ser); in form erythrocyte (serine 290). The stretch at 307–359 (EPELDLSSIKEVAEAKRKEEKVEKCGEDDETVPAEYRLKPATDKDGKPLLPEP) is one Inhibitory domain 2 repeat. Composition is skewed to basic and acidic residues over residues 320–331 (EAKRKEEKVEKC), 342–377 (YRLK…ELSK), and 384–399 (SNEK…EESK). 3 positions are modified to phosphoserine: serine 367, serine 369, and serine 376. Over residues 400–411 (AAVPAPVAEAVP) the composition is skewed to low complexity. At serine 444 the chain carries Phosphoserine. Over residues 446 to 496 (GRKEADPEEGKPVADKIKEKSKEEEREKLGEKEETIPPDYRLEEAKDKDGK) the composition is skewed to basic and acidic residues. The Inhibitory domain 3 repeat unit spans residues 450-503 (ADPEEGKPVADKIKEKSKEEEREKLGEKEETIPPDYRLEEAKDKDGKPLLPSEP). Phosphoserine occurs at positions 520, 531, 579, and 581. The disordered stretch occupies residues 543-718 (VSEVVSQSPA…KPKANEKNAS (176 aa)). Residues 566–579 (PSNKELDDALDKLS) are compositionally biased toward basic and acidic residues. An Inhibitory domain 4 repeat occupies 587 to 640 (PDPDENKPMEDKVKERAKKEHKDKLGERDDTIPPEYRHLLDQGEQDKPEKPPTK). Basic and acidic residues-rich tracts occupy residues 587-650 (PDPD…KPAG) and 706-718 (ETSK…KNAS).

It belongs to the protease inhibitor I27 (calpastatin) family.

Its function is as follows. Specific inhibition of calpain (calcium-dependent cysteine protease). Plays a key role in postmortem tenderization of meat and have been proposed to be involved in muscle protein degradation in living tissue. This Oryctolagus cuniculus (Rabbit) protein is Calpastatin (CAST).